Consider the following 545-residue polypeptide: Ribulokinase (545 aa).

The protein belongs to the ribulokinase family.

The enzyme catalyses D-ribulose + ATP = D-ribulose 5-phosphate + ADP + H(+). It carries out the reaction L-ribulose + ATP = L-ribulose 5-phosphate + ADP + H(+). It functions in the pathway carbohydrate degradation; L-arabinose degradation via L-ribulose; D-xylulose 5-phosphate from L-arabinose (bacterial route): step 2/3. The chain is Ribulokinase from Staphylococcus aureus (strain Mu3 / ATCC 700698).